Reading from the N-terminus, the 388-residue chain is uncharacterized protein (388 aa).

Transmembrane regions (helical) follow at residues 18 to 38 (AAMF…PLYV), 42 to 62 (LHLS…ATLL), 89 to 111 (ASGL…WAIL), 116 to 136 (VLLG…GMWL), 145 to 165 (VISW…PLGL), 171 to 191 (AGLA…SGVI), 219 to 239 (TGLV…ALWF), 248 to 268 (GFAM…CAKF), 287 to 307 (TGLA…GAAI), 341 to 361 (AFQD…TPFI), and 365 to 385 (QVFL…HLLL).

This sequence belongs to the major facilitator superfamily. YfcJ family.

Its subcellular location is the cell inner membrane. This is an uncharacterized protein from Salmonella typhimurium (strain LT2 / SGSC1412 / ATCC 700720).